The primary structure comprises 100 residues: Urease subunit gamma (100 aa).

It belongs to the urease gamma subunit family. As to quaternary structure, heterotrimer of UreA (gamma), UreB (beta) and UreC (alpha) subunits. Three heterotrimers associate to form the active enzyme.

The protein resides in the cytoplasm. It catalyses the reaction urea + 2 H2O + H(+) = hydrogencarbonate + 2 NH4(+). Its pathway is nitrogen metabolism; urea degradation; CO(2) and NH(3) from urea (urease route): step 1/1. The protein is Urease subunit gamma of Pseudomonas putida (strain ATCC 700007 / DSM 6899 / JCM 31910 / BCRC 17059 / LMG 24140 / F1).